Here is a 101-residue protein sequence, read N- to C-terminus: Movement protein (101 aa).

A helical transmembrane segment spans residues 30-50 (EVAVLSFVALICIYLLYLWVL). The tract at residues 78–101 (RSPIPNTLEPTAPVHPGPFVPGSG) is disordered. Pro residues predominate over residues 90-101 (PVHPGPFVPGSG).

Belongs to the mastrevirus movement protein family. In terms of assembly, interacts with the capsid protein (CP). Part of a MP-CP-viral DNA complex.

It is found in the host membrane. Functionally, involved in the viral transport within, and between cells. The chain is Movement protein from Maize streak virus genotype E (isolate Pat) (MSV).